The chain runs to 461 residues: Glycine--tRNA ligase (461 aa).

Residues arginine 100 and glutamate 163 each contribute to the substrate site. Residues 195–197, 205–210, 282–283, and 326–329 contribute to the ATP site; these read RNE, FRTREF, EL, and GLGR. 210–214 contributes to the substrate binding site; it reads FEQME. 322–326 contacts substrate; it reads EPAAG.

It belongs to the class-II aminoacyl-tRNA synthetase family. As to quaternary structure, homodimer.

It localises to the cytoplasm. It carries out the reaction tRNA(Gly) + glycine + ATP = glycyl-tRNA(Gly) + AMP + diphosphate. Functionally, catalyzes the attachment of glycine to tRNA(Gly). The chain is Glycine--tRNA ligase from Corynebacterium efficiens (strain DSM 44549 / YS-314 / AJ 12310 / JCM 11189 / NBRC 100395).